A 482-amino-acid polypeptide reads, in one-letter code: Methylenetetrahydrofolate--tRNA-(uracil-5-)-methyltransferase TrmFO (482 aa).

An FAD-binding site is contributed by glycine 20 to glycine 25.

It belongs to the MnmG family. TrmFO subfamily. The cofactor is FAD.

The protein localises to the cytoplasm. The catalysed reaction is uridine(54) in tRNA + (6R)-5,10-methylene-5,6,7,8-tetrahydrofolate + NADH + H(+) = 5-methyluridine(54) in tRNA + (6S)-5,6,7,8-tetrahydrofolate + NAD(+). It carries out the reaction uridine(54) in tRNA + (6R)-5,10-methylene-5,6,7,8-tetrahydrofolate + NADPH + H(+) = 5-methyluridine(54) in tRNA + (6S)-5,6,7,8-tetrahydrofolate + NADP(+). Functionally, catalyzes the folate-dependent formation of 5-methyl-uridine at position 54 (M-5-U54) in all tRNAs. The sequence is that of Methylenetetrahydrofolate--tRNA-(uracil-5-)-methyltransferase TrmFO from Rhodopseudomonas palustris (strain HaA2).